The primary structure comprises 295 residues: Probable isochorismatase (295 aa).

Positions 1 to 21 (MGIPKIAGYPLPTPAEFPDNR) are disordered. In terms of domain architecture, Carrier spans 207-286 (EIRSQKPLTL…EWWLVIEQAR (80 aa)). Serine 247 carries the O-(pantetheine 4'-phosphoryl)serine modification.

It belongs to the isochorismatase family. Pantetheine 4'-phosphate is required as a cofactor.

The catalysed reaction is isochorismate + H2O = (2S,3S)-2,3-dihydroxy-2,3-dihydrobenzoate + pyruvate. It functions in the pathway siderophore biosynthesis; vulnibactin biosynthesis. Involved in the biosynthesis of the catechol siderophore vulnibactin. Vulnibactin is a chelating compound involved in transporting iron from the bacterial environment into the cell cytoplasm. The sequence is that of Probable isochorismatase (venB) from Vibrio vulnificus (strain CMCP6).